Here is a 247-residue protein sequence, read N- to C-terminus: MLPSQEASKLYHEHYMRNSRAIGVLWAIFTICFAIINVVVFIQPYWVGDSVSTPKPGYFGLFHYCVGSGLAGRELTCRGSFTDFSTIPSGAFKAAAFFVLLSMVLILGCITCFALFFFCNTATVYKICAWMQLLAALCLVLGCMIFPDGWDAETIRDMCGAKTGKYSLGDCSVRWAYILAIIGILNALILSFLAFVLGNRQTDLLQEELKQENKDFVGSTVSSVLRPGGDVSGWGVLPCPVAHTQGP.

4 helical membrane passes run 22 to 42, 97 to 117, 127 to 147, and 178 to 198; these read IGVL…VVFI, FFVL…ALFF, ICAW…MIFP, and ILAI…FVLG.

The protein belongs to the LHFP family. As to quaternary structure, interacts with GABA(A) receptor subunits. Interacts with GABRB3. Interacts with GABRA2. Interacts with GABRG2. Identified in a complex of 720 kDa composed of LHFPL4, NLGN2, GABRA1, GABRB2, GABRG2 and GABRB3. Interacts with GABRA1. Interacts with NLGN2; leading to mutual regulation of protein level and synaptic clustering.

Its subcellular location is the cell projection. It is found in the dendrite. It localises to the postsynaptic cell membrane. In terms of biological role, plays a role in the regulation of inhibitory synapse formation and function by being involved in maintening gamma-aminobutyric acid receptors (GABAARs) clustering and their associated scaffold proteins at inhibitory synaptic sites. Acts in concert with NLGN2 to recruit or stabilize GABAARs. This chain is LHFPL tetraspan subfamily member 4 protein, found in Bos taurus (Bovine).